The chain runs to 1182 residues: DNA-directed RNA polymerase subunit beta (1182 aa).

The segment covering 1150 to 1162 (DEEVEMKDEDDDN) has biased composition (acidic residues). A disordered region spans residues 1150 to 1182 (DEEVEMKDEDDDNIPNATSALEQVVQPTVTEEE). The span at 1171–1182 (EQVVQPTVTEEE) shows a compositional bias: low complexity.

This sequence belongs to the RNA polymerase beta chain family. As to quaternary structure, the RNAP catalytic core consists of 2 alpha, 1 beta, 1 beta' and 1 omega subunit. When a sigma factor is associated with the core the holoenzyme is formed, which can initiate transcription.

It catalyses the reaction RNA(n) + a ribonucleoside 5'-triphosphate = RNA(n+1) + diphosphate. Its function is as follows. DNA-dependent RNA polymerase catalyzes the transcription of DNA into RNA using the four ribonucleoside triphosphates as substrates. The chain is DNA-directed RNA polymerase subunit beta from Exiguobacterium sp. (strain ATCC BAA-1283 / AT1b).